The primary structure comprises 938 residues: Mediator of RNA polymerase II transcription subunit 16 (938 aa).

This sequence belongs to the Mediator complex subunit 16 family. As to quaternary structure, component of the Mediator complex.

The protein resides in the nucleus. Component of the Mediator complex, a coactivator involved in the regulated transcription of nearly all RNA polymerase II-dependent genes. Mediator functions as a bridge to convey information from gene-specific regulatory proteins to the basal RNA polymerase II transcription machinery. Mediator is recruited to promoters by direct interactions with regulatory proteins and serves as a scaffold for the assembly of a functional preinitiation complex with RNA polymerase II and the general transcription factors. In Eremothecium gossypii (strain ATCC 10895 / CBS 109.51 / FGSC 9923 / NRRL Y-1056) (Yeast), this protein is Mediator of RNA polymerase II transcription subunit 16 (SIN4).